We begin with the raw amino-acid sequence, 237 residues long: Probable transcriptional regulatory protein PSHAa1370 (237 aa).

The protein belongs to the TACO1 family.

It is found in the cytoplasm. This is Probable transcriptional regulatory protein PSHAa1370 from Pseudoalteromonas translucida (strain TAC 125).